The primary structure comprises 65 residues: DNA-directed RNA polymerase subunit Rpo10 (65 aa).

Cys-7, Cys-10, Cys-44, and Cys-45 together coordinate Zn(2+).

This sequence belongs to the archaeal Rpo10/eukaryotic RPB10 RNA polymerase subunit family. As to quaternary structure, part of the RNA polymerase complex. Zn(2+) serves as cofactor.

The protein resides in the cytoplasm. The protein localises to the chromosome. The enzyme catalyses RNA(n) + a ribonucleoside 5'-triphosphate = RNA(n+1) + diphosphate. Functionally, DNA-dependent RNA polymerase (RNAP) catalyzes the transcription of DNA into RNA using the four ribonucleoside triphosphates as substrates. The chain is DNA-directed RNA polymerase subunit Rpo10 from Thermococcus kodakarensis (strain ATCC BAA-918 / JCM 12380 / KOD1) (Pyrococcus kodakaraensis (strain KOD1)).